A 549-amino-acid polypeptide reads, in one-letter code: Glucose-6-phosphate isomerase (549 aa).

The Proton donor role is filled by Glu-353. Catalysis depends on residues His-384 and Lys-512.

The protein belongs to the GPI family.

It is found in the cytoplasm. It carries out the reaction alpha-D-glucose 6-phosphate = beta-D-fructose 6-phosphate. It participates in carbohydrate biosynthesis; gluconeogenesis. Its pathway is carbohydrate degradation; glycolysis; D-glyceraldehyde 3-phosphate and glycerone phosphate from D-glucose: step 2/4. Its function is as follows. Catalyzes the reversible isomerization of glucose-6-phosphate to fructose-6-phosphate. The protein is Glucose-6-phosphate isomerase of Solidesulfovibrio magneticus (strain ATCC 700980 / DSM 13731 / RS-1) (Desulfovibrio magneticus).